A 254-amino-acid polypeptide reads, in one-letter code: Fluoride-specific ion channel FluC 1 (254 aa).

Transmembrane regions (helical) follow at residues 19-39 (LDIL…TALY), 51-71 (IIGM…YGSV), and 80-100 (AFLI…VAVL). Residues glycine 58 and serine 61 each coordinate Na(+).

This sequence belongs to the fluoride channel Fluc/FEX (TC 1.A.43) family.

The protein localises to the cell inner membrane. The enzyme catalyses fluoride(in) = fluoride(out). With respect to regulation, na(+) is not transported, but it plays an essential structural role and its presence is essential for fluoride channel function. Fluoride-specific ion channel. Important for reducing fluoride concentration in the cell, thus reducing its toxicity. This is Fluoride-specific ion channel FluC 1 from Brucella suis biovar 1 (strain 1330).